A 439-amino-acid polypeptide reads, in one-letter code: C4-dicarboxylate transport protein (439 aa).

9 helical membrane-spanning segments follow: residues 10-30 (LYVQ…FYPP), 45-65 (LIKM…IAGM), 77-97 (LALL…LVLV), 145-165 (AFAK…GFAL), 185-205 (VLFA…FGAM), 223-243 (LMGT…GTIT), 290-310 (VVGL…AIYL), 332-352 (TLLA…GSGF), and 353-373 (IVLA…LALI). Residues 415–439 (LNGQTAEEASAPQALPDRMESRIHH) form a disordered region.

Belongs to the dicarboxylate/amino acid:cation symporter (DAACS) (TC 2.A.23) family.

It localises to the cell inner membrane. Its function is as follows. Responsible for the transport of dicarboxylates such as succinate, fumarate, and malate from the periplasm across the membrane. This is C4-dicarboxylate transport protein from Verminephrobacter eiseniae (strain EF01-2).